A 57-amino-acid chain; its full sequence is UPF0391 membrane protein Nham_2738 (57 aa).

2 helical membrane-spanning segments follow: residues 4 to 24 (WVVTFLIIALIAGILGFGGLA) and 30 to 50 (IAKIIFFIAVILFVVSAVVGL).

The protein belongs to the UPF0391 family.

The protein localises to the cell membrane. The protein is UPF0391 membrane protein Nham_2738 of Nitrobacter hamburgensis (strain DSM 10229 / NCIMB 13809 / X14).